Here is a 151-residue protein sequence, read N- to C-terminus: MSIEVGQKAPIFTLPTDEGEMLSLDDLKGKKVILYFYPKDDTPGCTKEACGFRDVWSQLSKAGVVVLGISKDSVKAHQSFKQKYNLPFTLLSDKDNTVCEQYGVMVDKNRFGKKYKGIERTTFLIDEEGVISAVWPKVKVDGHVAEVVGRL.

Residues 3–151 (IEVGQKAPIF…GHVAEVVGRL (149 aa)) form the Thioredoxin domain. Residue Cys45 is the Cysteine sulfenic acid (-SOH) intermediate of the active site. An intrachain disulfide couples Cys45 to Cys50.

It belongs to the peroxiredoxin family. BCP/PrxQ subfamily. Monomer.

The catalysed reaction is a hydroperoxide + [thioredoxin]-dithiol = an alcohol + [thioredoxin]-disulfide + H2O. Thiol-specific peroxidase that catalyzes the reduction of hydrogen peroxide and organic hydroperoxides to water and alcohols, respectively. Plays a role in cell protection against oxidative stress by detoxifying peroxides and as sensor of hydrogen peroxide-mediated signaling events. In Coxiella burnetii (strain RSA 493 / Nine Mile phase I), this protein is Putative peroxiredoxin bcp (bcp).